Reading from the N-terminus, the 137-residue chain is Chaperone protein YscB (137 aa).

In terms of assembly, interacts with SycN to form a complex which specifically binds to YopN.

The protein localises to the cytoplasm. The protein resides in the cell inner membrane. Functionally, functions as a specific chaperone for YopN. It could facilitate the secretion and the subsequent translocation of YopN. The polypeptide is Chaperone protein YscB (yscB) (Yersinia enterocolitica).